Reading from the N-terminus, the 39-residue chain is MTSQARIPLWIVAVVAGLGVITVVGLFFYGSYVGLGSSL.

A helical membrane pass occupies residues 7–27; the sequence is IPLWIVAVVAGLGVITVVGLF.

Belongs to the PsbJ family. In terms of assembly, PSII is composed of 1 copy each of membrane proteins PsbA, PsbB, PsbC, PsbD, PsbE, PsbF, PsbH, PsbI, PsbJ, PsbK, PsbL, PsbM, PsbT, PsbX, PsbY, PsbZ, Psb30/Ycf12, peripheral proteins PsbO, CyanoQ (PsbQ), PsbU, PsbV and a large number of cofactors. It forms dimeric complexes.

It is found in the cellular thylakoid membrane. Its function is as follows. One of the components of the core complex of photosystem II (PSII). PSII is a light-driven water:plastoquinone oxidoreductase that uses light energy to abstract electrons from H(2)O, generating O(2) and a proton gradient subsequently used for ATP formation. It consists of a core antenna complex that captures photons, and an electron transfer chain that converts photonic excitation into a charge separation. In Synechococcus sp. (strain JA-2-3B'a(2-13)) (Cyanobacteria bacterium Yellowstone B-Prime), this protein is Photosystem II reaction center protein J.